A 108-amino-acid chain; its full sequence is Histone H4 (108 aa).

The segment at Met-1–His-24 is disordered. The DNA-binding element occupies Gly-17 to Ala-21.

It belongs to the histone H4 family. The nucleosome is a histone octamer containing two molecules each of H2A, H2B, H3 and H4 assembled in one H3-H4 heterotetramer and two H2A-H2B heterodimers. The octamer wraps approximately 147 bp of DNA.

The protein resides in the nucleus. The protein localises to the chromosome. Core component of nucleosome. Nucleosomes wrap and compact DNA into chromatin, limiting DNA accessibility to the cellular machineries which require DNA as a template. Histones thereby play a central role in transcription regulation, DNA repair, DNA replication and chromosomal stability. DNA accessibility is regulated via a complex set of post-translational modifications of histones, also called histone code, and nucleosome remodeling. This is Histone H4 from Mastigamoeba balamuthi (Phreatamoeba balamuthi).